The following is a 285-amino-acid chain: Probable endonuclease 4 (285 aa).

Zn(2+) is bound by residues His-69, His-109, Glu-145, Asp-179, His-182, His-216, Asp-229, His-231, and Glu-261.

Belongs to the AP endonuclease 2 family. It depends on Zn(2+) as a cofactor.

The enzyme catalyses Endonucleolytic cleavage to 5'-phosphooligonucleotide end-products.. In terms of biological role, endonuclease IV plays a role in DNA repair. It cleaves phosphodiester bonds at apurinic or apyrimidinic (AP) sites, generating a 3'-hydroxyl group and a 5'-terminal sugar phosphate. The sequence is that of Probable endonuclease 4 from Shigella boydii serotype 4 (strain Sb227).